The following is a 67-amino-acid chain: Conotoxin TsMMSK-011 (67 aa).

A signal peptide spans 1–20 (MMSKLGVLLTICLLLFPLTA). A propeptide spanning residues 21–50 (VQLDGDQPADLPALRTQDISTDHSPWFDPV) is cleaved from the precursor. Intrachain disulfides connect cysteine 53/cysteine 65, cysteine 54/cysteine 61, and cysteine 58/cysteine 64. At proline 63 the chain carries 4-hydroxyproline.

Belongs to the conotoxin M superfamily. In terms of tissue distribution, expressed by the venom duct.

The protein resides in the secreted. The chain is Conotoxin TsMMSK-011 from Conus tessulatus (Tessellate cone).